Here is a 472-residue protein sequence, read N- to C-terminus: MENFKHLPEPFRIRVIEPVKRTTREYREQAMLKSGMNPFLLDSEDIFIDLLTDSGTGAVTQDMQAAMLRGDEAYSGSRSYYALAKAVKDIFGYEYTIPTHQGRGAEQIYIPVLIAKREREKGLDRSKMVVFSNYFFDTTQGHSQINGATVRNVYIKEAFDTTAKHPFKGNFDLEKLEKGIQEAGAHNVPYIVCTITCNSAGGQPVSIANLKGMYEIARKYDIPVIMDSARFAENAYFVQQREEAYKDWTIEQITYESYRYADGLAMSAKKDAMVPMGGILAFKDKSMEEVYHECRTLCVVQEGFPTYGGLEGGAMERLAVGLHDGMRQEWLAYRIAQIEYLVAGLEKIGVPCQQPGGHAAFVDAGKLLPHIPADQFPAQALSCELYKVAGIRAVEIGSFLLGRDPKTGKQLPCPAELLRLTIPRATYTQTHMDFIIEAFQKVKENAENIKGLTFTYEPKVLRHFTARLKEVE.

K270 carries the N6-(pyridoxal phosphate)lysine modification.

It belongs to the beta-eliminating lyase family. Homotetramer. Pyridoxal 5'-phosphate serves as cofactor.

The catalysed reaction is L-tryptophan + H2O = indole + pyruvate + NH4(+). It participates in amino-acid degradation; L-tryptophan degradation via pyruvate pathway; indole and pyruvate from L-tryptophan: step 1/1. The sequence is that of Tryptophanase from Haemophilus influenzae (strain 86-028NP).